The sequence spans 447 residues: Putative branched-chain amino acid carrier protein SSP1343 (447 aa).

The next 12 helical transmembrane spans lie at 6–26, 40–60, 74–94, 116–136, 143–163, 192–212, 228–248, 289–309, 324–344, 349–369, 381–401, and 416–436; these read WIIG…IFPP, ILAF…VGAL, PKFS…LFAI, LALF…CINP, IGSL…VKGF, GYLT…VNAV, LMAG…LGYI, LLGI…VVAV, IYVI…LNSV, VPVL…ILLA, IPVA…QGWI, and LEWF…AAMV.

The protein belongs to the branched chain amino acid transporter family.

Its subcellular location is the cell membrane. Functionally, component of the transport system for branched-chain amino acids (leucine, isoleucine and valine), which is coupled to a proton motive force. The polypeptide is Putative branched-chain amino acid carrier protein SSP1343 (Staphylococcus saprophyticus subsp. saprophyticus (strain ATCC 15305 / DSM 20229 / NCIMB 8711 / NCTC 7292 / S-41)).